The primary structure comprises 356 residues: Fructose-1,6-bisphosphatase class 1 (356 aa).

Mg(2+)-binding residues include Glu91, Asp113, Leu115, and Asp116. Substrate contacts are provided by residues Asp116–Ser119 and Asn208. Glu280 lines the Mg(2+) pocket.

The protein belongs to the FBPase class 1 family. As to quaternary structure, homotetramer. The cofactor is Mg(2+).

The protein localises to the cytoplasm. It carries out the reaction beta-D-fructose 1,6-bisphosphate + H2O = beta-D-fructose 6-phosphate + phosphate. The protein operates within carbohydrate biosynthesis; gluconeogenesis. The sequence is that of Fructose-1,6-bisphosphatase class 1 from Methylacidiphilum infernorum (isolate V4) (Methylokorus infernorum (strain V4)).